Here is a 172-residue protein sequence, read N- to C-terminus: S-ribosylhomocysteine lyase (172 aa).

Fe cation is bound by residues His-54, His-58, and Cys-128.

The protein belongs to the LuxS family. In terms of assembly, homodimer. Fe cation is required as a cofactor.

It catalyses the reaction S-(5-deoxy-D-ribos-5-yl)-L-homocysteine = (S)-4,5-dihydroxypentane-2,3-dione + L-homocysteine. Functionally, involved in the synthesis of autoinducer 2 (AI-2) which is secreted by bacteria and is used to communicate both the cell density and the metabolic potential of the environment. The regulation of gene expression in response to changes in cell density is called quorum sensing. Catalyzes the transformation of S-ribosylhomocysteine (RHC) to homocysteine (HC) and 4,5-dihydroxy-2,3-pentadione (DPD). The sequence is that of S-ribosylhomocysteine lyase from Aliivibrio fischeri (strain MJ11) (Vibrio fischeri).